Here is a 723-residue protein sequence, read N- to C-terminus: ADP-ribosylation factor-binding protein GGA3 (723 aa).

Residues 1-313 (MAEAEGESLE…GEVATLTLPD (313 aa)) form a binds to ARF1 (in long isoform) region. Positions 16-146 (ATNPSNRQED…MLKRQGIVQS (131 aa)) constitute a VHS domain. Phosphoserine is present on residues S159 and S275. The 128-residue stretch at 171–298 (DEEKSKLLAK…VINSYKTIIE (128 aa)) folds into the GAT domain. A unstructured hinge region spans residues 299 to 593 (GQVINGEVAT…IHVPLESIKP (295 aa)). Positions 339–384 (SSVLAPAPTPPSSGIPILPPPPQASGPPRSRSSSQAEATLGPSSTS) are disordered. Pro residues predominate over residues 345-363 (APTPPSSGIPILPPPPQAS). Over residues 364–374 (GPPRSRSSSQA) the composition is skewed to low complexity. Residues 391-395 (DEELL) carry the DXXLL motif. A disordered region spans residues 428-464 (DFFSPRPGTAACGASDAPLLQPSAPSSSSSQAPLPPP). Residues 441–459 (ASDAPLLQPSAPSSSSSQA) show a composition bias toward low complexity. Residues 594–715 (SSALPVTAYD…TEVGEVDQFP (122 aa)) enclose the GAE domain.

The protein belongs to the GGA protein family. In terms of assembly, monomer. Interacts with GGA1 and GGA2. Binds to clathrin and activated ARFs, such as ARF1, ARF5 and ARF6. Binds RABEP1 and RABGEF1. Interacts with the membrane proteins M6PR/CD-MPR and IGF2R/CI-MPR and the accessory proteins SYNRG, EPN4, NECAP1, NECAP2 and AFTPH/aftiphilin. Interacts with TSG101 and UBC. Interacts with ADRA2B. Interacts with NTRK1; the interaction is independent of NTRK1 activation and ubiquitination. Interacts (via VHS domain) with BACE1 (via DXXLL motif). Phosphorylated by CK2 and dephosphorylated by PP2A. Phosphorylation of GGA3 allows the internal DXXLL motif to bind the VHS domain and to inhibit the recognition of cargo signals. Post-translationally, ubiquitinated. In terms of processing, proteolytically cleaved during apoptosis by CASP3. In terms of tissue distribution, ubiquitously expressed.

Its subcellular location is the golgi apparatus. The protein resides in the trans-Golgi network membrane. It localises to the endosome membrane. The protein localises to the early endosome membrane. It is found in the recycling endosome membrane. Functionally, plays a role in protein sorting and trafficking between the trans-Golgi network (TGN) and endosomes. Mediates the ARF-dependent recruitment of clathrin to the TGN and binds ubiquitinated proteins and membrane cargo molecules with a cytosolic acidic cluster-dileucine (DXXLL) motif. Mediates export of the GPCR receptor ADRA2B to the cell surface. nvolved in BACE1 transport and sorting as well as regulation of BACE1 protein levels. Regulates retrograde transport of BACE1 from endosomes to the trans-Golgi network via interaction through the VHS motif and dependent of BACE1 phosphorylation. Modulates BACE1 protein levels independently of the interaction between VHS domain and DXXLL motif through recognition of ubiquitination. Key player in a novel DXXLL-mediated endosomal sorting machinery to the recycling pathway that targets NTRK1 to the plasma membrane. This chain is ADP-ribosylation factor-binding protein GGA3, found in Homo sapiens (Human).